Consider the following 637-residue polypeptide: tRNA uridine 5-carboxymethylaminomethyl modification enzyme MnmG (637 aa).

Residue 18–23 (GAGHAG) coordinates FAD. Position 282–296 (282–296 (GPRYCPSIEDKIVRF)) interacts with NAD(+).

The protein belongs to the MnmG family. In terms of assembly, homodimer. Heterotetramer of two MnmE and two MnmG subunits. FAD serves as cofactor.

It is found in the cytoplasm. Its function is as follows. NAD-binding protein involved in the addition of a carboxymethylaminomethyl (cmnm) group at the wobble position (U34) of certain tRNAs, forming tRNA-cmnm(5)s(2)U34. This chain is tRNA uridine 5-carboxymethylaminomethyl modification enzyme MnmG, found in Pediococcus pentosaceus (strain ATCC 25745 / CCUG 21536 / LMG 10740 / 183-1w).